Here is a 525-residue protein sequence, read N- to C-terminus: GMP synthase [glutamine-hydrolyzing] (525 aa).

The Glutamine amidotransferase type-1 domain maps to 9 to 207 (RILILDFGSQ…VLDICRCTPL (199 aa)). Cys86 functions as the Nucleophile in the catalytic mechanism. Residues His181 and Glu183 contribute to the active site. Residues 208–400 (WTPAKIIEDA…LGLPYDMLYR (193 aa)) enclose the GMPS ATP-PPase domain. 235–241 (SGGVDSS) lines the ATP pocket.

In terms of assembly, homodimer.

It catalyses the reaction XMP + L-glutamine + ATP + H2O = GMP + L-glutamate + AMP + diphosphate + 2 H(+). It participates in purine metabolism; GMP biosynthesis; GMP from XMP (L-Gln route): step 1/1. Catalyzes the synthesis of GMP from XMP. The polypeptide is GMP synthase [glutamine-hydrolyzing] (Sodalis glossinidius (strain morsitans)).